Here is a 552-residue protein sequence, read N- to C-terminus: MSDIAIIVSLLSLVAVLGLWIGHIKIKGVGLGIGGVLFGGIIISHCTHLYGIELDAHTLHFIQEFGLILFVYSIGIQVGPGFFASLRQSGLKLNGFAVMIVGLSGILVALIHKLFDVPLPVILGIFSGAVTNTPSLGAGQQVLTELGGDNITAVMGMSYAIAYPFGIIGILLSMWLIRIIFKVNIDKEAQEFDNNQNQQKEGLDTLNVRLTNPNLGGLKLKEIPDFESHTVIYSRLKRNDQLIVPNVDTVLNVGDVLHLVGEKATLRKMQLILGEEADVSVSTRGTIFRSERAVVTNENVFGKKIRHLMLKGKYEVVISRLNRAGVELIPNGEMALQFGDVLNLVGRQEDIETVRAIIGDAHQKLQQVQMLPIFVGIGLGVLLGSLPLYIPGFPVALKLGLAGGPLVVALILARIGSIGKLYWFMPPSANLALREIGIVLFLSVVGLKAGANFLDTLLSPEGLAWMGYGAIITFIPLIVTGFVARIYGKMNYLSLCGLLSGAMTDPPALAFANEIKDGHGAAALSYATVYPLVMFLRIILPQLLAILLWTAS.

Transmembrane regions (helical) follow at residues 4 to 24 (IAII…IGHI), 29 to 49 (VGLG…CTHL), 65 to 85 (FGLI…FFAS), 95 to 115 (GFAV…HKLF), and 161 to 181 (IAYP…RIIF). 2 RCK C-terminal domains span residues 190–275 (QEFD…ILGE) and 277–360 (ADVS…IIGD). A run of 6 helical transmembrane segments spans residues 370–390 (MLPI…PLYI), 402–424 (AGGP…LYWF), 438–458 (IVLF…DTLL), 463–483 (LAWM…TGFV), 492–512 (YLSL…LAFA), and 529–549 (VYPL…ILLW).

The protein belongs to the AAE transporter (TC 2.A.81) family. YidE subfamily.

It is found in the cell membrane. The chain is Putative transport protein APL_0966 from Actinobacillus pleuropneumoniae serotype 5b (strain L20).